The sequence spans 174 residues: ATP-dependent protease subunit HslV (174 aa).

Residue Thr-2 is part of the active site. 3 residues coordinate Na(+): Gly-157, Cys-160, and Thr-163.

This sequence belongs to the peptidase T1B family. HslV subfamily. As to quaternary structure, a double ring-shaped homohexamer of HslV is capped on each side by a ring-shaped HslU homohexamer. The assembly of the HslU/HslV complex is dependent on binding of ATP.

Its subcellular location is the cytoplasm. It catalyses the reaction ATP-dependent cleavage of peptide bonds with broad specificity.. With respect to regulation, allosterically activated by HslU binding. Functionally, protease subunit of a proteasome-like degradation complex believed to be a general protein degrading machinery. The sequence is that of ATP-dependent protease subunit HslV from Shewanella sediminis (strain HAW-EB3).